Consider the following 173-residue polypeptide: Shikimate kinase 1 (173 aa).

14-19 (GAGKST) contributes to the ATP binding site. Position 18 (serine 18) interacts with Mg(2+). The substrate site is built by aspartate 36, arginine 60, and glycine 82. Arginine 120 contributes to the ATP binding site. Substrate is bound at residue arginine 140. Glutamine 157 contributes to the ATP binding site.

Belongs to the shikimate kinase family. Monomer. Mg(2+) serves as cofactor.

It is found in the cytoplasm. It carries out the reaction shikimate + ATP = 3-phosphoshikimate + ADP + H(+). It participates in metabolic intermediate biosynthesis; chorismate biosynthesis; chorismate from D-erythrose 4-phosphate and phosphoenolpyruvate: step 5/7. Functionally, catalyzes the specific phosphorylation of the 3-hydroxyl group of shikimic acid using ATP as a cosubstrate. The sequence is that of Shikimate kinase 1 from Salmonella typhimurium (strain LT2 / SGSC1412 / ATCC 700720).